The primary structure comprises 572 residues: Transmembrane glycoprotein NMB (572 aa).

The N-terminal stretch at 1-22 is a signal peptide; sequence MECLYYFLGFLLLAARLPLDAA. Over 23-498 the chain is Extracellular; sequence KRFHDVLGNE…DPASPLRMAN (476 aa). The Cell attachment site signature appears at 64–66; that stretch reads RGD. Residues Asn-93, Asn-134, Asn-146, Asn-200, Asn-249, Asn-275, Asn-296, Asn-300, Asn-306, and Asn-312 are each glycosylated (N-linked (GlcNAc...) asparagine). The region spanning 240 to 327 is the PKD domain; sequence VTMFQKNDRN…AAPGPCPPPP (88 aa). The tract at residues 320-362 is disordered; that stretch reads PGPCPPPPPPPRPSKPTPSLATTLKSYDSNTPGPAGDNPLELS. Residues 321–335 show a composition bias toward pro residues; the sequence is GPCPPPPPPPRPSKP. Positions 338 to 351 are enriched in polar residues; that stretch reads SLATTLKSYDSNTP. Asn-459 and Asn-467 each carry an N-linked (GlcNAc...) asparagine glycan. A helical transmembrane segment spans residues 499 to 519; it reads SALISVGCLAIFVTVISLLVY. The Cytoplasmic portion of the chain corresponds to 520-572; sequence KKHKEYNPIENSPGNVVRSKGLSVFLNRAKAVFFPGNQEKDPLLKNQEFKGVS. A Phosphoserine modification is found at Ser-542.

Belongs to the PMEL/NMB family. In terms of tissue distribution, widely expressed, but very low expression, if any, in the brain. Expressed in the epidermis with higher levels in melanocytes compared with keratinocytes and Langerhans cells (at protein level). Expressed in peripheral blood, but not bone marrow mononuclear cells. Expressed in tissue macrophages, including liver Kuppfer cells and lung alveolar macrophages, in podocytes and in some cells of the ciliary body of the eye (at protein level). May be overexpressed in various cancers, including melanoma and glioblastoma multiforme.

The protein resides in the cell membrane. It localises to the melanosome membrane. It is found in the early endosome membrane. Could be a melanogenic enzyme. The sequence is that of Transmembrane glycoprotein NMB (GPNMB) from Homo sapiens (Human).